A 293-amino-acid chain; its full sequence is ATP synthase gamma chain (293 aa).

Belongs to the ATPase gamma chain family. F-type ATPases have 2 components, CF(1) - the catalytic core - and CF(0) - the membrane proton channel. CF(1) has five subunits: alpha(3), beta(3), gamma(1), delta(1), epsilon(1). CF(0) has three main subunits: a, b and c.

Its subcellular location is the cell inner membrane. Its function is as follows. Produces ATP from ADP in the presence of a proton gradient across the membrane. The gamma chain is believed to be important in regulating ATPase activity and the flow of protons through the CF(0) complex. In Allorhizobium ampelinum (strain ATCC BAA-846 / DSM 112012 / S4) (Agrobacterium vitis (strain S4)), this protein is ATP synthase gamma chain.